The following is a 1262-amino-acid chain: Histone-lysine N-methyltransferase eggless (1262 aa).

The interval 1–194 is disordered; that stretch reads MSGQPTAVDC…MEVDQDVEES (194 aa). Composition is skewed to basic and acidic residues over residues 26-41, 50-61, and 81-99; these read ASREKSYGLPVRKGEN, AAKDVEIEELTH, and APDEPGKLADESEDRKGEN. Low complexity predominate over residues 157 to 166; that stretch reads SSISSPTSES. A compositionally biased stretch (basic and acidic residues) spans 167-179; it reads FPEKDEKTNKENE. Ser215 bears the Phosphoserine mark. Phosphothreonine is present on Thr217. Positions 353–420 form a coiled coil; sequence EKSDFSKNKL…LEKVQTTADK (68 aa). 2 Tudor domains span residues 529 to 602 and 629 to 686; these read RLTI…SEKV and QCTR…RETQ. Positions 743–764 are disordered; sequence SSAATPAGGRTNAGGVSTSNSA. An MBD domain is found at 818–884; the sequence is LDSYSPLAKP…DNFDFTPDLK (67 aa). The Pre-SET domain maps to 946–1018; the sequence is LCCDCEDDCS…NCLNRVVQFS (73 aa). Positions 948, 950, 954, 960, 962, 1000, 1004, 1006, and 1010 each coordinate Zn(2+). In terms of domain architecture, SET spans 1021–1237; the sequence is MKLQVFKTSN…SGTELTWNYN (217 aa). S-adenosyl-L-methionine-binding positions include 1031-1033, Asp1069, and Tyr1071; that span reads RGW. The span at 1086-1097 shows a compositional bias: basic and acidic residues; the sequence is EGYESEVDHSDP. Residues 1086 to 1148 are disordered; sequence EGYESEVDHS…QSSELDSQER (63 aa). A compositionally biased stretch (acidic residues) spans 1098–1113; it reads DAEEDNGGPDAEDDDD. Over residues 1129–1141 the composition is skewed to low complexity; the sequence is RSGSTQNSSTQSS. S-adenosyl-L-methionine-binding positions include Arg1191 and 1194-1195; that span reads NH. Cys1197, Cys1250, Cys1252, and Cys1257 together coordinate Zn(2+). The Post-SET domain maps to 1246-1262; that stretch reads KVLYCQCGAPNCRLRLL.

This sequence belongs to the class V-like SAM-binding methyltransferase superfamily. Histone-lysine methyltransferase family. Suvar3-9 subfamily. Expressed in ovary (at protein level).

The protein resides in the nucleus. The protein localises to the chromosome. The catalysed reaction is L-lysyl(9)-[histone H3] + 3 S-adenosyl-L-methionine = N(6),N(6),N(6)-trimethyl-L-lysyl(9)-[histone H3] + 3 S-adenosyl-L-homocysteine + 3 H(+). Histone methyltransferase that specifically trimethylates 'Lys-10' of histone H3 (H3K9me3) in ovary. H3K9me3 represents a specific tag for epigenetic transcriptional repression by recruiting Su(var)205/HP1 to methylated histones. Plays a central role during oogenesis. This Drosophila melanogaster (Fruit fly) protein is Histone-lysine N-methyltransferase eggless (egg).